Here is a 472-residue protein sequence, read N- to C-terminus: Bifunctional protein HldE (472 aa).

The ribokinase stretch occupies residues 1 to 315 (MAKRVKILVV…QLLNSSFGAN (315 aa)). ATP is bound at residue 192–195 (NKKE). Asp260 is an active-site residue. The cytidylyltransferase stretch occupies residues 340–472 (FTNGCFDILH…IKDAKNDDKK (133 aa)).

The protein in the N-terminal section; belongs to the carbohydrate kinase PfkB family. This sequence in the C-terminal section; belongs to the cytidylyltransferase family. Homodimer.

It catalyses the reaction D-glycero-beta-D-manno-heptose 7-phosphate + ATP = D-glycero-beta-D-manno-heptose 1,7-bisphosphate + ADP + H(+). The catalysed reaction is D-glycero-beta-D-manno-heptose 1-phosphate + ATP + H(+) = ADP-D-glycero-beta-D-manno-heptose + diphosphate. Its pathway is nucleotide-sugar biosynthesis; ADP-L-glycero-beta-D-manno-heptose biosynthesis; ADP-L-glycero-beta-D-manno-heptose from D-glycero-beta-D-manno-heptose 7-phosphate: step 1/4. It functions in the pathway nucleotide-sugar biosynthesis; ADP-L-glycero-beta-D-manno-heptose biosynthesis; ADP-L-glycero-beta-D-manno-heptose from D-glycero-beta-D-manno-heptose 7-phosphate: step 3/4. In terms of biological role, catalyzes the phosphorylation of D-glycero-D-manno-heptose 7-phosphate at the C-1 position to selectively form D-glycero-beta-D-manno-heptose-1,7-bisphosphate. Functionally, catalyzes the ADP transfer from ATP to D-glycero-beta-D-manno-heptose 1-phosphate, yielding ADP-D-glycero-beta-D-manno-heptose. The protein is Bifunctional protein HldE of Campylobacter concisus (strain 13826).